Reading from the N-terminus, the 3033-residue chain is Genome polyprotein (3033 aa).

Ser2 bears the N-acetylserine; by host mark. An interaction with STAT1 region spans residues 2 to 23 (STNPKPQRKTKRNTNRRPQDVK). Positions 2 to 58 (STNPKPQRKTKRNTNRRPQDVKFPGGGQIVGGVYLLPRRGPRLGVRATRKTSERSQP) are interaction with EIF2AK2/PKR. The interaction with DDX3X stretch occupies residues 2 to 59 (STNPKPQRKTKRNTNRRPQDVKFPGGGQIVGGVYLLPRRGPRLGVRATRKTSERSQPR). A disordered region spans residues 2-75 (STNPKPQRKT…PKDRRSTGKS (74 aa)). 2 short sequence motifs (nuclear localization signal) span residues 5–13 (PKPQRKTKR) and 38–43 (PRRGPR). The segment covering 7–16 (PQRKTKRNTN) has biased composition (basic residues). The segment covering 32 to 47 (GGVYLLPRRGPRLGVR) has biased composition (low complexity). Ser53 carries the post-translational modification Phosphoserine; by host. 2 consecutive short sequence motifs (nuclear localization signal) follow at residues 58 to 64 (PRGRRQP) and 66 to 71 (PKDRRS). Ser99 and Ser116 each carry phosphoserine; by host. Residues 112 to 152 (PRHRSRNLGRVIDTITCGFADLMGYIPVVGAPVGGVARALA) form an important for endoplasmic reticulum and mitochondrial localization region. The interval 122 to 173 (VIDTITCGFADLMGYIPVVGAPVGGVARALAHGVRVLEDGINYATRNLPGCS) is interaction with APOA2. Positions 164-167 (YATR) are important for lipid droplets localization. Positions 178 to 191 (LLALLSCVTVPVSS) are cleaved as a propeptide — ER anchor for the core protein, removed in mature form by host signal peptidase. Residues 190–358 (SSVEIRNIST…FGGHWGVVFG (169 aa)) lie on the Lumenal side of the membrane. 2 N-linked (GlcNAc...) asparagine; by host glycosylation sites follow: Asn196 and Asn209. Residues 265–296 (IVMAATVCSALYVGDVCGAVMIVSQALIVSPE) form an important for fusion region. Asn305 carries an N-linked (GlcNAc...) asparagine; by host glycan. The helical transmembrane segment at 359–379 (LAYFSMQGAWAKVIAILLLVA) threads the bilayer. Residues 380-729 (GVDATTYSTG…WEWVVLLFLL (350 aa)) lie on the Lumenal side of the membrane. The segment at 385–412 (TYSTGATVGRTVGSFAGLFKLGAQQNVQ) is HVR1. N-linked (GlcNAc...) (high mannose) asparagine; by host glycosylation is found at Asn417, Asn423, and Asn430. Disulfide bonds link Cys429-Cys554, Cys452-Cys459, Cys488-Cys496, and Cys505-Cys510. The N-linked (GlcNAc...) asparagine; by host glycan is linked to Asn448. The tract at residues 475–480 (ETNVTN) is HVR2. A glycan (N-linked (GlcNAc...) asparagine; by host) is linked at Asn477. Residues 482–495 (EDMRPYCWHYPPKP) are CD81-binding 1. Asn534 carries N-linked (GlcNAc...) asparagine; by host glycosylation. Residues 546–553 (PPRGAWFG) are CD81-binding 2. Asn558 is a glycosylation site (N-linked (GlcNAc...) asparagine; by host). Intrachain disulfides connect Cys566–Cys571, Cys585–Cys589, Cys601–Cys624, and Cys611–Cys648. Residues Asn627 and Asn649 are each glycosylated (N-linked (GlcNAc...) (high mannose) asparagine; by host). An intrachain disulfide couples Cys656 to Cys681. The PKR/eIF2-alpha phosphorylation homology domain (PePHD) stretch occupies residues 664–675 (GQQSPLLHSTTE). Residues 730–750 (LADARICACLWMLIILGQAEA) form a helical membrane-spanning segment. At 751 to 761 (ALEKLIILHSA) the chain is on the lumenal side. A helical transmembrane segment spans residues 762–782 (SAASANGPLWFFIFFTAAWYL). The Cytoplasmic portion of the chain corresponds to 783–786 (KGRV). A helical transmembrane segment spans residues 787 to 807 (VPAATYSVLGLWSFLLLVLAL). Over 808 to 817 (PQQAYALDAA) the chain is Lumenal. A helical transmembrane segment spans residues 818 to 838 (EQGELGLVILMIISIFTLTPA). The Cytoplasmic portion of the chain corresponds to 839 to 885 (YKILLSRSVWWLSYMLVLAEAQVQQWVPPLEARGGRDGIIWVAVILH). The chain crosses the membrane as a helical span at residues 886-906 (PHLVFEVTKWLLAILGSAYLL). Topologically, residues 907-932 (KASLLRVPYFVRAHALLRVCTLVRHL) are lumenal. The region spanning 907 to 1030 (KASLLRVPYF…GYTSKGWKLL (124 aa)) is the Peptidase C18 domain. The segment at 908–1210 (ASLLRVPYFV…PVESLDIARR (303 aa)) is protease NS2-3. Residue Cys926 is the site of S-palmitoyl cysteine; by host attachment. The chain crosses the membrane as a helical span at residues 933 to 953 (AGARYIQMLLITMGRWTGTYI). Residues 933 to 953 (AGARYIQMLLITMGRWTGTYI) form an interaction with host SCPS1 region. The Cytoplasmic segment spans residues 954–1661 (YDHLSPLSTW…CMQADLEVMT (708 aa)). Residues His956, Glu976, and Cys997 each act as for protease NS2 activity; shared with dimeric partner in the active site. Residues 1031 to 1212 (APITAYTQQT…ESLDIARRTP (182 aa)) form the Peptidase S29 domain. Catalysis depends on charge relay system; for serine protease NS3 activity residues His1087 and Asp1111. Residues Cys1127 and Cys1129 each contribute to the Zn(2+) site. Ser1169 functions as the Charge relay system; for serine protease NS3 activity in the catalytic mechanism. The Zn(2+) site is built by Cys1175 and His1179. Positions 1221–1373 (PAVPQTYQVG…ANIEEVALGH (153 aa)) constitute a Helicase ATP-binding domain. An ATP-binding site is contributed by 1234–1241 (APTGSGKS). Mg(2+)-binding residues include Ser1241 and Glu1321. The short motif at 1320–1323 (DECH) is the DECH box element. The segment at 1490–1502 (QRRGRTGRGRLGT) is RNA-binding. A helical transmembrane segment spans residues 1662–1682 (STWVLAGGVLAAVAAYCLATG). Positions 1683-1694 (CISIIGRIHLND) are NS3-binding. The Cytoplasmic segment spans residues 1683 to 1809 (CISIIGRIHL…ALTSPLPTST (127 aa)). Residues 1810-1830 (TILLNIMGGWLASQIAPPAGA) form a helical membrane-spanning segment. Residues 1831–1832 (TG) are Lumenal-facing. The helical transmembrane segment at 1833–1853 (FVVSGLVGAAVGSIGLGKILV) threads the bilayer. A topological domain (cytoplasmic) is located at residue Asp1854. Residues 1855–1875 (VLAGYGAGISGALVAFKIMSG) form a helical membrane-spanning segment. Residues 1876 to 1885 (EKPSVEDVVN) lie on the Lumenal side of the membrane. The chain crosses the membrane as a helical span at residues 1886–1906 (LLPAILSPGALVVGVICAAIL). Residues 1907-1976 (RRHVGQGEGA…WITEDCPVPC (70 aa)) lie on the Cytoplasmic side of the membrane. Cys1976 carries S-palmitoyl cysteine; by host lipidation. The stretch at 1977–2007 (SGSWLRDIWEWVCSILTDFKNWLSAKLLPKM) is an intramembrane region. The Cytoplasmic segment spans residues 2008–3012 (PGLPFISCQK…FHSVSHARPR (1005 aa)). Zn(2+)-binding residues include Cys2015, Cys2033, Cys2035, and Cys2056. The segment at 2124–2212 (EFFSWVDGVQ…ASSSASQLSA (89 aa)) is FKBP8-binding. Residues 2124–2332 (EFFSWVDGVQ…PVPPPRRRRA (209 aa)) are transcriptional activation. Residues 2139 to 2143 (PTPGP) are interaction with non-structural protein 4A. The segment at 2192 to 2213 (RRLARGSPPSQASSSASQLSAP) is disordered. Residues 2193–2460 (RLARGSPPSQ…ALITPCGPEE (268 aa)) form an interaction with host SKP2 region. Residues Ser2198, Ser2201, Ser2205, Ser2208, Ser2211, and Ser2214 each carry the phosphoserine; by host modification. The span at 2198 to 2213 (SPPSQASSSASQLSAP) shows a compositional bias: low complexity. Residues 2214-2249 (SLKATCTTHKTAYDCDMVDANLFMGGDVTRIESDSK) are ISDR. Positions 2214 to 2275 (SLKATCTTHK…REPSVPSEYL (62 aa)) are interaction with EIF2AK2/PKR. Residues 2249–2306 (KVIVLDSLDSMTEVEDDREPSVPSEYLTRRRKFPPALPPWARPDYNPPVIETWKRPDY) form an NS4B-binding region. Residues 2299-2377 (ETWKRPDYEP…DTGGDSVQQP (79 aa)) are V3. Residues 2322–2325 (APVP) carry the SH3-binding motif. The Nuclear localization signal signature appears at 2327–2335 (PRRRRARVL). Lys2350 is covalently cross-linked (Glycyl lysine isopeptide (Lys-Gly) (interchain with G-Cter in ubiquitin)). The tract at residues 2354-2431 (PLQDTNDSGH…IDSDSKSWST (78 aa)) is disordered. Polar residues predominate over residues 2355 to 2391 (LQDTNDSGHSTGADTGGDSVQQPSGETAASDAGSLSS). 2 positions are modified to phosphoserine; by host: Ser2471 and Ser2484. The RdRp catalytic domain occupies 2656–2774 (PMGFSYDTRC…ISESQGNEED (119 aa)). Residues Asp2662, Asp2760, and Asp2761 each contribute to the Mg(2+) site. The helical transmembrane segment at 3013-3033 (LLLLCLLLLSVGVGIFLLPAR) threads the bilayer.

Belongs to the hepacivirus polyprotein family. As to quaternary structure, homooligomer. Interacts with E1 (via C-terminus). Interacts with the non-structural protein 5A. Interacts (via N-terminus) with host STAT1 (via SH2 domain); this interaction results in decreased STAT1 phosphorylation and ubiquitin-mediated proteasome-dependent STAT1 degradation, leading to decreased IFN-stimulated gene transcription. Interacts with host STAT3; this interaction constitutively activates STAT3. Interacts with host LTBR receptor. Interacts with host TNFRSF1A receptor and possibly induces apoptosis. Interacts with host HNRPK. Interacts with host YWHAE. Interacts with host UBE3A/E6AP. Interacts with host DDX3X. Interacts with host APOA2. Interacts with host RXRA protein. Interacts with host SP110 isoform 3/Sp110b; this interaction sequesters the transcriptional corepressor SP110 away from the nucleus. Interacts with host CREB3 nuclear transcription protein; this interaction triggers cell transformation. Interacts with host ACY3. Interacts with host C1QR1. Interacts with host RBM24; this interaction, which enhances the interaction of the mature core protein with 5'-UTR, may inhibit viral translation and favor replication. Interacts with host EIF2AK2/PKR; this interaction induces the autophosphorylation of EIF2AK2. Part of the viral assembly initiation complex composed of NS2, E1, E2, NS3, NS4A, NS5A and the mature core protein. In terms of assembly, forms a heterodimer with envelope glycoprotein E2. Interacts with mature core protein. Interacts with protease NS2. The heterodimer E1/E2 interacts with host CLDN1; this interaction plays a role in viral entry into host cell. Interacts with host SPSB2 (via C-terminus). Part of the viral assembly initiation complex composed of NS2, E1, E2, NS3, NS4A, NS5A and the mature core protein. Interacts with host NEURL3; this interaction prevents E1 binding to glycoprotein E2. Forms a heterodimer with envelope glycoprotein E1. Interacts with host CD81 and SCARB1 receptors; these interactions play a role in viral entry into host cell. Interacts with host EIF2AK2/PKR; this interaction inhibits EIF2AK2 and probably allows the virus to evade the innate immune response. Interacts with host CD209/DC-SIGN and CLEC4M/DC-SIGNR. Interact with host SPCS1; this interaction is essential for viral particle assembly. Interacts with protease NS2. The heterodimer E1/E2 interacts with host CLDN1; this interaction plays a role in viral entry into host cell. Part of the viral assembly initiation complex composed of NS2, E1, E2, NS3, NS4A, NS5A and the mature core protein. Interacts with host SLC3A2/4F2hc; the interaction may facilitate viral entry into host cell. Interacts with human PLSCR1. As to quaternary structure, homohexamer. Homoheptamer. Interacts with protease NS2. In terms of assembly, homodimer. Interacts with host SPCS1; this interaction is essential for viral particle assembly. Interacts with envelope glycoprotein E1. Interacts with envelope glycoprotein E2. Interacts with viroporin p7. Interacts with serine protease/helicase NS3. Part of the replication complex composed of NS2, NS3, NS4A, NS4B, NS5A and the RNA-directed RNA polymerase embedded in an ER-derived membranous web. Part of the viral assembly initiation complex composed of NS2, E1, E2, NS3, NS4A, NS5A and the mature core protein. Interacts with protease NS2. Interacts with non-structural protein 4A; this interaction stabilizes the folding of NS3 serine protease. NS3-NS4A interaction is essential for NS3 activation and allows membrane anchorage of the latter. NS3/NS4A complex also prevents phosphorylation of host IRF3, thus preventing the establishment of dsRNA induced antiviral state. Interacts with host MAVS; this interaction leads to the cleavage and inhibition of host MAVS. Interacts with host TICAM1; this interaction leads to the cleavage and inhibition of host TICAM1. Interacts with host TANK-binding kinase/TBK1; this interaction results in the inhibition of the association between TBK1 and IRF3, which leads to the inhibition of IRF3 activation. Interacts with host RBM24. Part of the replication complex composed of NS2, NS3, NS4A, NS4B, NS5A and the RNA-directed RNA polymerase embedded in an ER-derived membranous web. Part of the viral assembly initiation complex composed of NS2, E1, E2, NS3, NS4A, NS5A and the mature core protein. As to quaternary structure, interacts with NS3 serine protease; this interaction stabilizes the folding of NS3 serine protease. NS3-NS4A interaction is essential for NS3 activation and allows membrane anchorage of the latter. Interacts with non-structural protein 5A (via N-terminus). Part of the replication complex composed of NS2, NS3, NS4A, NS4B, NS5A and the RNA-directed RNA polymerase embedded in an ER-derived membranous web. Part of the viral assembly initiation complex composed of NS2, E1, E2, NS3, NS4A, NS5A and the mature core protein. In terms of assembly, homomultimer. Interacts with non-structural protein NS5A. Interacts with host PLA2G4C; this interaction likely initiates the recruitment of replication complexes to lipid droplets. Interacts with host STING; this interaction disrupts the interaction between STING and TBK1 thereby suppressing the interferon signaling. Part of the replication complex composed of NS2, NS3, NS4A, NS4B, NS5A and the RNA-directed RNA polymerase embedded in an ER-derived membranous web. Monomer. Homodimer; dimerization is required for RNA-binding. Interacts with the mature core protein. Interacts (via N-terminus) with non-structural protein 4A. Interacts with non-structural protein 4B. Interacts (via region D2) with RNA-directed RNA polymerase. Part of the viral assembly initiation complex composed of NS2, E1, E2, NS3, NS4A, NS5A and the mature core protein. Part of the replication complex composed of NS2, NS3, NS4A, NS4B, NS5A and the RNA-directed RNA polymerase embedded in an ER-derived membranous web. Interacts with host GRB2. Interacts with host BIN1. Interacts with host PIK3R1. Interacts with host SRCAP. Interacts with host FKBP8. Interacts (via C-terminus) with host VAPB (via MSP domain). Interacts with host EIF2AK2/PKR; this interaction leads to disruption of EIF2AK2 dimerization by NS5A and probably allows the virus to evade the innate immune response. Interacts (via N-terminus) with host PACSIN2 (via N-terminus); this interaction attenuates protein kinase C alpha-mediated phosphorylation of PACSIN2 by disrupting the interaction between PACSIN2 and PRKCA. Interacts (via N-terminus) with host SRC kinase (via SH2 domain). Interacts with most Src-family kinases. Interacts with host IFI27 and SKP2; promotes the ubiquitin-mediated proteasomal degradation of NS5A. Interacts with host GPS2. Interacts with host TNFRSF21; this interaction allows the modulation by the virus of JNK, p38 MAPK, STAT3, and Akt signaling pathways in a DR6-dependent manner. Interacts (via N-terminus) with host CIDEB (via N-terminus); this interaction seems to regulate the association of HCV particles with APOE. Interacts with host CHKA/Choline Kinase-alpha; CHKA bridges host PI4KA and NS5A and potentiates NS5A-stimulated PI4KA activity, which then facilitates the targeting of the ternary complex to the ER for viral replication. Interacts with host SPSB2 (via C-terminus); this interaction targets NS5A for ubiquitination and degradation. Interacts with host RAB18; this interaction may promote the association of NS5A and other replicase components with lipid droplets. Interacts (via region D2) with host PPIA/CYPA; the interaction stimulates RNA-binding ability of NS5A and is dependent on the peptidyl-prolyl cis-trans isomerase activity of PPIA/CYPA. Interacts with host TRIM14; this interaction induces the degradation of NS5A. As to quaternary structure, homooligomer. Interacts with non-structural protein 5A. Interacts with host VAPB. Interacts with host PRK2/PKN2. Interacts with host HNRNPA1 and SEPT6; these interactions facilitate viral replication. Part of the replication complex composed of NS2, NS3, NS4A, NS4B, NS5A and the RNA-directed RNA polymerase. The cofactor is Zn(2+). Mg(2+) is required as a cofactor. Specific enzymatic cleavages in vivo yield mature proteins. The structural proteins, core, E1, E2 and p7 are produced by proteolytic processing by host signal peptidases. The core protein precursor is synthesized as a 23 kDa, which is retained in the ER membrane through the hydrophobic signal peptide. Cleavage by the signal peptidase releases the 21 kDa mature core protein. The cleavage of the core protein precursor occurs between aminoacids 176 and 188 but the exact cleavage site is not known. Some degraded forms of the core protein appear as well during the course of infection. The other proteins (p7, NS2, NS3, NS4A, NS4B, NS5A and NS5B) are cleaved by the viral proteases. Autoprocessing between NS2 and NS3 is mediated by the NS2 cysteine protease catalytic domain and regulated by the NS3 N-terminal domain. Post-translationally, phosphorylated by host PKC and PKA. In terms of processing, ubiquitinated; mediated by UBE3A and leading to core protein subsequent proteasomal degradation. Highly N-glycosylated. Post-translationally, palmitoylation is required for NS2/3 autoprocessing and E2 recruitment to membranes. In terms of processing, palmitoylated. This modification may play a role in its polymerization or in protein-protein interactions. Phosphorylated on serines in a basal form termed p56. p58 is a hyperphosphorylated form of p56. p56 and p58 coexist in the cell in roughly equivalent amounts. Hyperphosphorylation is dependent on the presence of NS4A. Host CSNK1A1/CKI-alpha or RPS6KB1 kinases may be responsible for NS5A phosphorylation. Post-translationally, tyrosine phosphorylation is essential for the interaction with host SRC. In terms of processing, ubiquitinated. Ubiquitination, most probably at Lys-2350, mediated by host IFI27 and SKP2 leads to proteasomal degradation, restricting viral infection. Ubiquitination by host TRIM22 leads to interruption of viral replication. The N-terminus is phosphorylated by host PRK2/PKN2.

It is found in the host endoplasmic reticulum membrane. Its subcellular location is the host mitochondrion membrane. The protein resides in the virion. The protein localises to the host cytoplasm. It localises to the host nucleus. It is found in the host lipid droplet. Its subcellular location is the virion membrane. The protein resides in the host mitochondrion. The protein localises to the host cell membrane. It localises to the host perinuclear region. The enzyme catalyses Hydrolysis of four peptide bonds in the viral precursor polyprotein, commonly with Asp or Glu in the P6 position, Cys or Thr in P1 and Ser or Ala in P1'.. It catalyses the reaction a ribonucleoside 5'-triphosphate + H2O = a ribonucleoside 5'-diphosphate + phosphate + H(+). It carries out the reaction ATP + H2O = ADP + phosphate + H(+). The catalysed reaction is RNA(n) + a ribonucleoside 5'-triphosphate = RNA(n+1) + diphosphate. Its activity is regulated as follows. Inhibited by the antiviral drug hexamethylene amiloride. Inhibition by amantadine appears to be genotype-dependent. Also inhibited by long-alkyl-chain iminosugar derivatives. Activity is up-regulated by PRK2/PKN2-mediated phosphorylation. Functionally, packages viral RNA to form a viral nucleocapsid, and promotes virion budding. Participates in the viral particle production as a result of its interaction with the non-structural protein 5A. Binds RNA and may function as a RNA chaperone to induce the RNA structural rearrangements taking place during virus replication. Modulates viral translation initiation by interacting with viral IRES and 40S ribosomal subunit. Affects various cell signaling pathways, host immunity and lipid metabolism. Prevents the establishment of cellular antiviral state by blocking the interferon-alpha/beta (IFN-alpha/beta) and IFN-gamma signaling pathways and by blocking the formation of phosphorylated STAT1 and promoting ubiquitin-mediated proteasome-dependent degradation of STAT1. Activates STAT3 leading to cellular transformation. Regulates the activity of cellular genes, including c-myc and c-fos. May repress the promoter of p53, and sequester CREB3 and SP110 isoform 3/Sp110b in the cytoplasm. Represses cell cycle negative regulating factor CDKN1A, thereby interrupting an important check point of normal cell cycle regulation. Targets transcription factors involved in the regulation of inflammatory responses and in the immune response: suppresses TNF-induced NF-kappa-B activation, and activates AP-1. Binds to dendritic cells (DCs) via C1QR1, resulting in down-regulation of T-lymphocytes proliferation. Alters lipid metabolism by interacting with hepatocellular proteins involved in lipid accumulation and storage. Induces up-regulation of FAS promoter activity, and thereby contributes to the increased triglyceride accumulation in hepatocytes (steatosis). In terms of biological role, forms a heterodimer with envelope glycoprotein E2, which mediates virus attachment to the host cell, virion internalization through clathrin-dependent endocytosis and fusion with host membrane. Fusion with the host cell is most likely mediated by both E1 and E2, through conformational rearrangements of the heterodimer required for fusion rather than a classical class II fusion mechanism. E1/E2 heterodimer binds host apolipoproteins such as APOB and ApoE thereby forming a lipo-viro-particle (LVP). APOE associated to the LVP allows the initial virus attachment to cell surface receptors such as the heparan sulfate proteoglycans (HSPGs), syndecan-1 (SDC1), syndecan-1 (SDC2), the low-density lipoprotein receptor (LDLR) and scavenger receptor class B type I (SCARB1). The cholesterol transfer activity of SCARB1 allows E2 exposure and binding of E2 to SCARB1 and the tetraspanin CD81. E1/E2 heterodimer binding on CD81 activates the epithelial growth factor receptor (EGFR) signaling pathway. Diffusion of the complex E1-E2-EGFR-SCARB1-CD81 to the cell lateral membrane allows further interaction with Claudin 1 (CLDN1) and occludin (OCLN) to finally trigger HCV entry. Its function is as follows. Forms a heterodimer with envelope glycoprotein E1, which mediates virus attachment to the host cell, virion internalization through clathrin-dependent endocytosis and fusion with host membrane. Fusion with the host cell is most likely mediated by both E1 and E2, through conformational rearrangements of the heterodimer required for fusion rather than a classical class II fusion mechanism. The interaction between envelope glycoprotein E2 and host apolipoprotein E/APOE allows the proper assembly, maturation and infectivity of the viral particles. This interaction is probably promoted via the up-regulation of cellular autophagy by the virus. E1/E2 heterodimer binds host apolipoproteins such as APOB and APOE thereby forming a lipo-viro-particle (LVP). APOE associated to the LVP allows the initial virus attachment to cell surface receptors such as the heparan sulfate proteoglycans (HSPGs), syndecan-1 (SDC1), syndecan-1 (SDC2), the low-density lipoprotein receptor (LDLR) and scavenger receptor class B type I (SCARB1). The cholesterol transfer activity of SCARB1 allows E2 exposure and binding of E2 to SCARB1 and the tetraspanin CD81. E1/E2 heterodimer binding on CD81 activates the epithelial growth factor receptor (EGFR) signaling pathway. Diffusion of the complex E1-E2-EGFR-SCARB1-CD81 to the cell lateral membrane allows further interaction with Claudin 1 (CLDN1) and occludin (OCLN) to finally trigger HCV entry. Inhibits host EIF2AK2/PKR activation, preventing the establishment of an antiviral state. Viral ligand for CD209/DC-SIGN and CLEC4M/DC-SIGNR, which are respectively found on dendritic cells (DCs), and on liver sinusoidal endothelial cells and macrophage-like cells of lymph node sinuses. These interactions allow the capture of circulating HCV particles by these cells and subsequent facilitated transmission to permissive cells such as hepatocytes and lymphocyte subpopulations. The interaction between E2 and host amino acid transporter complex formed by SLC3A2 and SLC7A5/LAT1 may facilitate viral entry into host cell. Ion channel protein that acts as a viroporin and plays an essential role in the assembly, envelopment and secretion of viral particles. Regulates the host cell secretory pathway, which induces the intracellular retention of viral glycoproteins and favors assembly of viral particles. Creates a pore in acidic organelles and releases Ca(2+) and H(+) in the cytoplasm of infected cells, leading to a productive viral infection. High levels of cytoplasmic Ca(2+) may trigger membrane trafficking and transport of viral ER-associated proteins to viroplasms, sites of viral genome replication. This ionic imbalance induces the assembly of the inflammasome complex, which triggers the maturation of pro-IL-1beta into IL-1beta through the action of caspase-1. Targets also host mitochondria and induces mitochondrial depolarization. In addition of its role as a viroporin, acts as a lipid raft adhesion factor. Functionally, cysteine protease required for the proteolytic auto-cleavage between the non-structural proteins NS2 and NS3. The N-terminus of NS3 is required for the function of NS2 protease (active region NS2-3). Promotes the initiation of viral particle assembly by mediating the interaction between structural and non-structural proteins. In terms of biological role, displays three enzymatic activities: serine protease with a chymotrypsin-like fold, NTPase and RNA helicase. NS3 serine protease, in association with NS4A, is responsible for the cleavages of NS3-NS4A, NS4A-NS4B, NS4B-NS5A and NS5A-NS5B. The NS3/NS4A complex prevents phosphorylation of host IRF3, thus preventing the establishment of dsRNA induced antiviral state. The NS3/NS4A complex induces host amino acid transporter component SLC3A2, thus contributing to HCV propagation. NS3 RNA helicase binds to RNA and unwinds both dsDNA and dsRNA in the 3' to 5' direction, and likely resolves RNA complicated stable secondary structures in the template strand. Binds a single ATP and catalyzes the unzipping of a single base pair of dsRNA. Inhibits host antiviral proteins TBK1 and IRF3 thereby preventing the establishment of an antiviral state. Cleaves host MAVS/CARDIF thereby preventing the establishment of an antiviral state. Cleaves host TICAM1/TRIF, thereby disrupting TLR3 signaling and preventing the establishment of an antiviral state. Its function is as follows. Induces a specific membrane alteration that serves as a scaffold for the virus replication complex. This membrane alteration gives rise to the so-called ER-derived membranous web that contains the replication complex. NS4B self-interaction contributes to its function in membranous web formation. Promotes host TRIF protein degradation in a CASP8-dependent manner thereby inhibiting host TLR3-mediated interferon signaling. Disrupts the interaction between STING and TBK1 contributing to the inhibition of interferon signaling. Phosphorylated protein that is indispensable for viral replication and assembly. Both hypo- and hyperphosphorylated states are required for the viral life cycle. The hyperphosphorylated form of NS5A is an inhibitor of viral replication. Involved in RNA-binding and especially in binding to the viral genome. Zinc is essential for RNA-binding. Participates in the viral particle production as a result of its interaction with the mature viral core protein. Its interaction with host VAPB may target the viral replication complex to vesicles. Down-regulates viral IRES translation initiation. Mediates interferon resistance, presumably by interacting with and inhibiting host EIF2AK2/PKR. Prevents BIN1-induced apoptosis. Acts as a transcriptional activator of some host genes important for viral replication when localized in the nucleus. Via the interaction with host PACSIN2, modulates lipid droplet formation in order to promote virion assembly. Modulates TNFRSF21/DR6 signaling pathway for viral propagation. Functionally, RNA-dependent RNA polymerase that performs primer-template recognition and RNA synthesis during viral replication. Initiates RNA transcription/replication at a flavin adenine dinucleotide (FAD), resulting in a 5'- FAD cap on viral RNAs. In this way, recognition of viral 5' RNA by host pattern recognition receptors can be bypassed, thereby evading activation of antiviral pathways. The sequence is that of Genome polyprotein from Hepatitis C virus genotype 2b (isolate JPUT971017) (HCV).